An 88-amino-acid polypeptide reads, in one-letter code: MTFLARLFGEKKKTAEIAKNRLSLLIAHERGDGVPKVDFLPALQRELIEVISKYVPVNSDDIKVHLDKQNNYEVLEVNIVLPEQNQGR.

Belongs to the MinE family.

Its function is as follows. Prevents the cell division inhibition by proteins MinC and MinD at internal division sites while permitting inhibition at polar sites. This ensures cell division at the proper site by restricting the formation of a division septum at the midpoint of the long axis of the cell. This Aromatoleum aromaticum (strain DSM 19018 / LMG 30748 / EbN1) (Azoarcus sp. (strain EbN1)) protein is Cell division topological specificity factor.